Consider the following 425-residue polypeptide: Glutamyl-tRNA reductase (425 aa).

Substrate-binding positions include 49-52 (TCNR), S109, 114-116 (EGQ), and Q120. The active-site Nucleophile is C50. Position 189–194 (189–194 (GAGETG)) interacts with NADP(+).

The protein belongs to the glutamyl-tRNA reductase family. Homodimer.

It catalyses the reaction (S)-4-amino-5-oxopentanoate + tRNA(Glu) + NADP(+) = L-glutamyl-tRNA(Glu) + NADPH + H(+). It functions in the pathway porphyrin-containing compound metabolism; protoporphyrin-IX biosynthesis; 5-aminolevulinate from L-glutamyl-tRNA(Glu): step 1/2. The protein operates within porphyrin-containing compound metabolism; chlorophyll biosynthesis. In terms of biological role, catalyzes the NADPH-dependent reduction of glutamyl-tRNA(Glu) to glutamate 1-semialdehyde (GSA). This chain is Glutamyl-tRNA reductase, found in Chlorobium phaeovibrioides (strain DSM 265 / 1930) (Prosthecochloris vibrioformis (strain DSM 265)).